We begin with the raw amino-acid sequence, 193 residues long: Potassium-transporting ATPase KdpC subunit (193 aa).

Residues 14–34 (ITFTFLVLCGLVYPLIVTGIA) traverse the membrane as a helical segment.

The protein belongs to the KdpC family. The system is composed of three essential subunits: KdpA, KdpB and KdpC.

The protein localises to the cell membrane. Its function is as follows. Part of the high-affinity ATP-driven potassium transport (or Kdp) system, which catalyzes the hydrolysis of ATP coupled with the electrogenic transport of potassium into the cytoplasm. This subunit acts as a catalytic chaperone that increases the ATP-binding affinity of the ATP-hydrolyzing subunit KdpB by the formation of a transient KdpB/KdpC/ATP ternary complex. This chain is Potassium-transporting ATPase KdpC subunit, found in Bacillus thuringiensis subsp. konkukian (strain 97-27).